The following is a 98-amino-acid chain: NADH-ubiquinone oxidoreductase chain 4L (98 aa).

3 helical membrane passes run 1–21, 26–46, and 61–81; these read MPSISTNIILAFTTALLGVLI, LMSSLLCLEGMMLSMFILVSL, and IILLVFAACEAAVGLALLVMV.

This sequence belongs to the complex I subunit 4L family. In terms of assembly, core subunit of respiratory chain NADH dehydrogenase (Complex I) which is composed of 45 different subunits.

Its subcellular location is the mitochondrion inner membrane. It carries out the reaction a ubiquinone + NADH + 5 H(+)(in) = a ubiquinol + NAD(+) + 4 H(+)(out). Functionally, core subunit of the mitochondrial membrane respiratory chain NADH dehydrogenase (Complex I) which catalyzes electron transfer from NADH through the respiratory chain, using ubiquinone as an electron acceptor. Part of the enzyme membrane arm which is embedded in the lipid bilayer and involved in proton translocation. The polypeptide is NADH-ubiquinone oxidoreductase chain 4L (MT-ND4L) (Galago senegalensis (Northern lesser bushbaby)).